A 30-amino-acid polypeptide reads, in one-letter code: Bowman-Birk type proteinase inhibitor 3 (30 aa).

2 cysteine pairs are disulfide-bonded: Cys9–Cys24 and Cys14–Cys22.

Inhibits trypsin (IC(50)=4.90 nM) and, to a lesser extent, alpha-chymotrypsin (IC(50)=1.87 uM). The sequence is that of Bowman-Birk type proteinase inhibitor 3 from Lathyrus sativus (White vetchling).